The following is a 185-amino-acid chain: Large ribosomal subunit protein uL5 (185 aa).

This sequence belongs to the universal ribosomal protein uL5 family. As to quaternary structure, part of the 50S ribosomal subunit; part of the 5S rRNA/L5/L18/L25 subcomplex. Contacts the 5S rRNA and the P site tRNA. Forms a bridge to the 30S subunit in the 70S ribosome.

Functionally, this is one of the proteins that bind and probably mediate the attachment of the 5S RNA into the large ribosomal subunit, where it forms part of the central protuberance. In the 70S ribosome it contacts protein S13 of the 30S subunit (bridge B1b), connecting the 2 subunits; this bridge is implicated in subunit movement. Contacts the P site tRNA; the 5S rRNA and some of its associated proteins might help stabilize positioning of ribosome-bound tRNAs. In Chelativorans sp. (strain BNC1), this protein is Large ribosomal subunit protein uL5.